Here is a 455-residue protein sequence, read N- to C-terminus: 5'-nucleotidase domain-containing protein 1 (455 aa).

Aspartate 16 functions as the Nucleophile in the catalytic mechanism. Mg(2+) is bound by residues aspartate 16 and aspartate 18. The Proton donor role is filled by aspartate 18. Lysine 171 carries the N6-acetyllysine modification. Residue aspartate 313 participates in Mg(2+) binding. The segment covering 339–364 (GDEGTRSQRPEESEPLEKKGKYEGPK) has biased composition (basic and acidic residues). A disordered region spans residues 339–368 (GDEGTRSQRPEESEPLEKKGKYEGPKAKPL).

It belongs to the 5'(3')-deoxyribonucleotidase family.

This is 5'-nucleotidase domain-containing protein 1 (NT5DC1) from Homo sapiens (Human).